The sequence spans 350 residues: MTASLLMLVVLMTSFAADKWITNAQLSLPLLIAAVCATATAAVGIPLLRRLKMGQFIREEGPKTHQSKAGTPTMGGLLVVPVGVVLGSLITRDAVASQQLLSLAVLTLAFMLIGGIDDWSSLTKHTNTGLTARGKLLLQAMATAAFLAIAAWQGWISSSIALPFGLELPLGLMIWPLGLFVVLAESNATNLTDGLDGLASGCGALVFTGLALQLMLRGDNGDPALAGFCMAMAGAWLGFLVHNRNPARAFMGDTGSLAMGAALSGVALLSNSLWPLLVMGGVFVAESLSVIIQVWVFKATKGPDGQGRRVFRMAPLHHHFELGGTDEQSVVPAFWLVTAGLVLLGLVLRP.

The next 9 membrane-spanning stretches (helical) occupy residues 28–48 (LPLLIAAVCATATAAVGIPLL), 70–90 (GTPTMGGLLVVPVGVVLGSLI), 100–120 (LLSLAVLTLAFMLIGGIDDWS), 136–156 (LLLQAMATAAFLAIAAWQGWI), 164–184 (FGLELPLGLMIWPLGLFVVLA), 195–215 (LDGLASGCGALVFTGLALQLM), 221–241 (GDPALAGFCMAMAGAWLGFLV), 249–269 (AFMGDTGSLAMGAALSGVALL), and 328–348 (QSVVPAFWLVTAGLVLLGLVL).

It belongs to the glycosyltransferase 4 family. MraY subfamily. Mg(2+) is required as a cofactor.

Its subcellular location is the cell inner membrane. The enzyme catalyses UDP-N-acetyl-alpha-D-muramoyl-L-alanyl-gamma-D-glutamyl-meso-2,6-diaminopimeloyl-D-alanyl-D-alanine + di-trans,octa-cis-undecaprenyl phosphate = di-trans,octa-cis-undecaprenyl diphospho-N-acetyl-alpha-D-muramoyl-L-alanyl-D-glutamyl-meso-2,6-diaminopimeloyl-D-alanyl-D-alanine + UMP. The protein operates within cell wall biogenesis; peptidoglycan biosynthesis. Functionally, catalyzes the initial step of the lipid cycle reactions in the biosynthesis of the cell wall peptidoglycan: transfers peptidoglycan precursor phospho-MurNAc-pentapeptide from UDP-MurNAc-pentapeptide onto the lipid carrier undecaprenyl phosphate, yielding undecaprenyl-pyrophosphoryl-MurNAc-pentapeptide, known as lipid I. This Synechococcus sp. (strain CC9605) protein is Phospho-N-acetylmuramoyl-pentapeptide-transferase.